A 207-amino-acid polypeptide reads, in one-letter code: Outer-membrane lipoprotein carrier protein (207 aa).

A signal peptide spans 1–21 (MRAIRMLLVSALAMGAVSAHA).

Belongs to the LolA family. As to quaternary structure, monomer.

The protein localises to the periplasm. Participates in the translocation of lipoproteins from the inner membrane to the outer membrane. Only forms a complex with a lipoprotein if the residue after the N-terminal Cys is not an aspartate (The Asp acts as a targeting signal to indicate that the lipoprotein should stay in the inner membrane). In Pseudomonas entomophila (strain L48), this protein is Outer-membrane lipoprotein carrier protein.